The sequence spans 103 residues: Large ribosomal subunit protein bL21 (103 aa).

This sequence belongs to the bacterial ribosomal protein bL21 family. Part of the 50S ribosomal subunit. Contacts protein L20.

This protein binds to 23S rRNA in the presence of protein L20. The protein is Large ribosomal subunit protein bL21 of Alcanivorax borkumensis (strain ATCC 700651 / DSM 11573 / NCIMB 13689 / SK2).